We begin with the raw amino-acid sequence, 211 residues long: Pyridoxine/pyridoxamine 5'-phosphate oxidase (211 aa).

Substrate-binding positions include 7 to 10 (RRDY) and Lys-65. FMN-binding positions include 60-65 (RIVLLK), 75-76 (YT), Arg-81, Lys-82, and Gln-104. Positions 122, 126, and 130 each coordinate substrate. FMN is bound by residues 139 to 140 (QS) and Trp-184. 190–192 (RLH) is a substrate binding site. An FMN-binding site is contributed by Arg-194.

The protein belongs to the pyridoxamine 5'-phosphate oxidase family. Homodimer. Requires FMN as cofactor.

It catalyses the reaction pyridoxamine 5'-phosphate + O2 + H2O = pyridoxal 5'-phosphate + H2O2 + NH4(+). The catalysed reaction is pyridoxine 5'-phosphate + O2 = pyridoxal 5'-phosphate + H2O2. The protein operates within cofactor metabolism; pyridoxal 5'-phosphate salvage; pyridoxal 5'-phosphate from pyridoxamine 5'-phosphate: step 1/1. Its pathway is cofactor metabolism; pyridoxal 5'-phosphate salvage; pyridoxal 5'-phosphate from pyridoxine 5'-phosphate: step 1/1. In terms of biological role, catalyzes the oxidation of either pyridoxine 5'-phosphate (PNP) or pyridoxamine 5'-phosphate (PMP) into pyridoxal 5'-phosphate (PLP). This is Pyridoxine/pyridoxamine 5'-phosphate oxidase from Aliivibrio fischeri (strain ATCC 700601 / ES114) (Vibrio fischeri).